Here is a 586-residue protein sequence, read N- to C-terminus: Arginine--tRNA ligase (586 aa).

Positions 127-137 match the 'HIGH' region motif; the sequence is PNVAKEMHVGH.

Belongs to the class-I aminoacyl-tRNA synthetase family. As to quaternary structure, monomer.

It is found in the cytoplasm. It carries out the reaction tRNA(Arg) + L-arginine + ATP = L-arginyl-tRNA(Arg) + AMP + diphosphate. The sequence is that of Arginine--tRNA ligase (argS) from Streptomyces coelicolor (strain ATCC BAA-471 / A3(2) / M145).